A 131-amino-acid chain; its full sequence is MTHRFRNTTFMRYLSNSRFKKKLILRKIKVSGPFVIQRTVHPQSAHNPNENCGNFDQRKVLGYFFKMFFYHNYNFVFTKLKLICLFLIISISSKKNFKLKVLILFFSIQKFTKSLDRNMSLAFDCTHKRVT.

Its subcellular location is the plastid. It localises to the chloroplast. This is an uncharacterized protein from Chlorella vulgaris (Green alga).